The primary structure comprises 2150 residues: Genome polyprotein (2150 aa).

Residue G2 is the site of N-myristoyl glycine; by host attachment. Over G2–T1463 the chain is Cytoplasmic. The tract at residues I565–V581 is amphipathic alpha-helix. Residues P592 to S611 are disordered. Active-site for protease 2A activity residues include H868 and D885. Zn(2+)-binding residues include C902 and C904. C956 functions as the For protease 2A activity in the catalytic mechanism. Zn(2+)-binding residues include C962 and H964. Residues S1088–Q1157 are membrane-binding. Residues S1088–T1221 are oligomerization. The segment at G1109 to S1113 is RNA-binding. Positions E1181–V1343 constitute an SF3 helicase domain. Zn(2+) is bound by residues C1350, C1361, and C1366. The C4-type; degenerate zinc-finger motif lies at C1350–C1366. Residues E1393 to V1400 are RNA-binding. The tract at residues M1404–Q1409 is oligomerization. An intramembrane segment occupies I1464–Y1479. The Cytoplasmic segment spans residues K1480 to F2150. Residue Y1489 is modified to O-(5'-phospho-RNA)-tyrosine. A Peptidase C3 domain is found at G1508–F1686. Residues H1547, E1578, and C1654 each act as for protease 3C activity in the active site. In terms of domain architecture, RdRp catalytic spans K1918–A2031. D1924 and D2017 together coordinate Mg(2+).

The protein belongs to the picornaviruses polyprotein family. As to quaternary structure, interacts with capsid protein VP1 and capsid protein VP3 to form heterotrimeric protomers. In terms of assembly, interacts with capsid protein VP0, and capsid protein VP3 to form heterotrimeric protomers. Five protomers subsequently associate to form pentamers which serve as building blocks for the capsid. Interacts with capsid protein VP2, capsid protein VP3 and capsid protein VP4 following cleavage of capsid protein VP0. Interacts with capsid protein VP1 and capsid protein VP3 in the mature capsid. As to quaternary structure, interacts with capsid protein VP0 and capsid protein VP1 to form heterotrimeric protomers. Five protomers subsequently associate to form pentamers which serve as building blocks for the capsid. Interacts with capsid protein VP4 in the mature capsid. Interacts with protein 2C; this interaction may be important for virion morphogenesis. In terms of assembly, interacts with capsid protein VP1 and capsid protein VP3. Homodimer. As to quaternary structure, homohexamer; forms a hexameric ring structure with 6-fold symmetry characteristic of AAA+ ATPases. Interacts (via N-terminus) with host RTN3 (via reticulon domain); this interaction is important for viral replication. Interacts with capsid protein VP3; this interaction may be important for virion morphogenesis. In terms of assembly, interacts with protein 3CD. Homodimer. Interacts with host GBF1. Interacts (via GOLD domain) with host ACBD3 (via GOLD domain); this interaction allows the formation of a viral protein 3A/ACBD3 heterotetramer with a 2:2 stoichiometry, which will stimulate the recruitment of host PI4KB in order to synthesize PI4P at the viral RNA replication sites. As to quaternary structure, interacts with RNA-directed RNA polymerase. In terms of assembly, interacts with protein 3AB and with RNA-directed RNA polymerase. Interacts with Viral protein genome-linked and with protein 3CD. Requires Mg(2+) as cofactor. In terms of processing, specific enzymatic cleavages in vivo by the viral proteases yield processing intermediates and the mature proteins. Post-translationally, myristoylation is required for the formation of pentamers during virus assembly. Further assembly of 12 pentamers and a molecule of genomic RNA generates the provirion. During virion maturation, immature virions are rendered infectious following cleavage of VP0 into VP4 and VP2. This maturation seems to be an autocatalytic event triggered by the presence of RNA in the capsid and it is followed by a conformational change infectious virion. In terms of processing, myristoylation is required during RNA encapsidation and formation of the mature virus particle. Post-translationally, VPg is uridylylated by the polymerase into VPg-pUpU. This acts as a nucleotide-peptide primer for the genomic RNA replication.

The protein localises to the virion. It localises to the host cytoplasm. The protein resides in the host cytoplasmic vesicle membrane. Its subcellular location is the host nucleus. It catalyses the reaction a ribonucleoside 5'-triphosphate + H2O = a ribonucleoside 5'-diphosphate + phosphate + H(+). The catalysed reaction is Selective cleavage of Tyr-|-Gly bond in the picornavirus polyprotein.. It carries out the reaction RNA(n) + a ribonucleoside 5'-triphosphate = RNA(n+1) + diphosphate. The enzyme catalyses Selective cleavage of Gln-|-Gly bond in the poliovirus polyprotein. In other picornavirus reactions Glu may be substituted for Gln, and Ser or Thr for Gly.. Replication or transcription is subject to high level of random mutations by the nucleotide analog ribavirin. Forms an icosahedral capsid of pseudo T=3 symmetry with capsid proteins VP2 and VP3. The capsid is 300 Angstroms in diameter, composed of 60 copies of each capsid protein and enclosing the viral positive strand RNA genome. Capsid protein VP1 mainly forms the vertices of the capsid. Capsid protein VP1 interacts with host cell receptor to provide virion attachment to target host cells. This attachment induces virion internalization. Tyrosine kinases are probably involved in the entry process. After binding to its receptor, the capsid undergoes conformational changes. Capsid protein VP1 N-terminus (that contains an amphipathic alpha-helix) and capsid protein VP4 are externalized. Together, they shape a pore in the host membrane through which viral genome is translocated to host cell cytoplasm. In terms of biological role, forms an icosahedral capsid of pseudo T=3 symmetry with capsid proteins VP2 and VP3. The capsid is 300 Angstroms in diameter, composed of 60 copies of each capsid protein and enclosing the viral positive strand RNA genome. Functionally, lies on the inner surface of the capsid shell. After binding to the host receptor, the capsid undergoes conformational changes. Capsid protein VP4 is released, Capsid protein VP1 N-terminus is externalized, and together, they shape a pore in the host membrane through which the viral genome is translocated into the host cell cytoplasm. Its function is as follows. Component of immature procapsids, which is cleaved into capsid proteins VP4 and VP2 after maturation. Allows the capsid to remain inactive before the maturation step. Cysteine protease that cleaves viral polyprotein and specific host proteins. It is responsible for the autocatalytic cleavage between the P1 and P2 regions, which is the first cleavage occurring in the polyprotein. Also cleaves the host translation initiation factor EIF4G1, in order to shut down the capped cellular mRNA translation. Inhibits the host nucleus-cytoplasm protein and RNA trafficking by cleaving host members of the nuclear pores. Counteracts stress granule formation probably by antagonizing its assembly or promoting its dissassembly. In terms of biological role, plays an essential role in the virus replication cycle by acting as a viroporin. Creates a pore in the host endoplasmic reticulum and as a consequence releases Ca2+ in the cytoplasm of infected cell. In turn, high levels of cytoplasmic calcium may trigger membrane trafficking and transport of viral ER-associated proteins to viroplasms, sites of viral genome replication. Functionally, induces and associates with structural rearrangements of intracellular membranes. Displays RNA-binding, nucleotide binding and NTPase activities. May play a role in virion morphogenesis and viral RNA encapsidation by interacting with the capsid protein VP3. Its function is as follows. Localizes the viral replication complex to the surface of membranous vesicles. Together with protein 3CD binds the Cis-Active RNA Element (CRE) which is involved in RNA synthesis initiation. Acts as a cofactor to stimulate the activity of 3D polymerase, maybe through a nucleid acid chaperone activity. Localizes the viral replication complex to the surface of membranous vesicles. It inhibits host cell endoplasmic reticulum-to-Golgi apparatus transport and causes the disassembly of the Golgi complex, possibly through GBF1 interaction. This would result in depletion of MHC, trail receptors and IFN receptors at the host cell surface. Plays an essential role in viral RNA replication by recruiting ACBD3 and PI4KB at the viral replication sites, thereby allowing the formation of the rearranged membranous structures where viral replication takes place. In terms of biological role, acts as a primer for viral RNA replication and remains covalently bound to viral genomic RNA. VPg is uridylylated prior to priming replication into VPg-pUpU. The oriI viral genomic sequence may act as a template for this. The VPg-pUpU is then used as primer on the genomic RNA poly(A) by the RNA-dependent RNA polymerase to replicate the viral genome. During genome replication, the VPg-RNA linkage is removed by the host TDP2, thereby accelerating replication. During the late stage of the replication cycle, host TDP2 is excluded from sites of viral RNA synthesis and encapsidation, allowing for the generation of progeny virions. Functionally, involved in the viral replication complex and viral polypeptide maturation. It exhibits protease activity with a specificity and catalytic efficiency that is different from protease 3C. Protein 3CD lacks polymerase activity. Protein 3CD binds to the 5'UTR of the viral genome. Its function is as follows. Replicates the viral genomic RNA on the surface of intracellular membranes. May form linear arrays of subunits that propagate along a strong head-to-tail interaction called interface-I. Covalently attaches UMP to a tyrosine of VPg, which is used to prime RNA synthesis. The positive stranded RNA genome is first replicated at virus induced membranous vesicles, creating a dsRNA genomic replication form. This dsRNA is then used as template to synthesize positive stranded RNA genomes. ss(+)RNA genomes are either translated, replicated or encapsidated. Major viral protease that mediates proteolytic processing of the polyprotein. Cleaves host EIF5B, contributing to host translation shutoff. Also cleaves host PABPC1, contributing to host translation shutoff. Cleaves host NLRP1, triggers host N-glycine-mediated degradation of the autoinhibitory NLRP1 N-terminal fragment. In Homo sapiens (Human), this protein is Genome polyprotein.